Here is a 609-residue protein sequence, read N- to C-terminus: Glutamine--fructose-6-phosphate aminotransferase [isomerizing] (609 aa).

The active-site Nucleophile; for GATase activity is the Cys2. Residues 2-218 (CGIVGAVAQR…EGDIAEVTRR (217 aa)) enclose the Glutamine amidotransferase type-2 domain. 2 consecutive SIS domains span residues 286 to 426 (AAKL…LKGV) and 458 to 599 (LAED…VDQP). The active-site For Fru-6P isomerization activity is Lys604.

Homodimer.

It is found in the cytoplasm. The catalysed reaction is D-fructose 6-phosphate + L-glutamine = D-glucosamine 6-phosphate + L-glutamate. In terms of biological role, catalyzes the first step in hexosamine metabolism, converting fructose-6P into glucosamine-6P using glutamine as a nitrogen source. The chain is Glutamine--fructose-6-phosphate aminotransferase [isomerizing] from Photorhabdus laumondii subsp. laumondii (strain DSM 15139 / CIP 105565 / TT01) (Photorhabdus luminescens subsp. laumondii).